Here is a 101-residue protein sequence, read N- to C-terminus: Ascorbate-specific PTS system EIIB component (101 aa).

A PTS EIIB type-2 domain is found at 3–96 (VRILAVCGNG…KLLEVIKAHF (94 aa)). Cys9 (phosphocysteine intermediate) is an active-site residue. At Cys9 the chain carries Phosphocysteine.

The protein localises to the cytoplasm. The catalysed reaction is N(pros)-phospho-L-histidyl-[protein] + L-ascorbate(out) = L-ascorbate 6-phosphate(in) + L-histidyl-[protein]. The phosphoenolpyruvate-dependent sugar phosphotransferase system (sugar PTS), a major carbohydrate active transport system, catalyzes the phosphorylation of incoming sugar substrates concomitantly with their translocation across the cell membrane. The enzyme II UlaABC PTS system is involved in ascorbate transport. The protein is Ascorbate-specific PTS system EIIB component (ulaB) of Shigella sonnei (strain Ss046).